The following is a 198-amino-acid chain: MQFEVKDLINKIKKDGLEEAEKLASEIILNAKRDAEAIILKAESDAKELKMQAEKEAGEYKIHSLEASRQAVRDLIIATENNIKSLFKIALKDSVSEVYDDNFLRELIIRVVDIWSKKDKIDIILNESAVSNLLSILRVNIGNRLDDAIELKPFKGISKGFKIQQRDGNLYYDFTSDTIADILFEYLNPRFKEVIKLG.

Belongs to the V-ATPase E subunit family.

In terms of biological role, produces ATP from ADP in the presence of a proton gradient across the membrane. This chain is V-type proton ATPase subunit E, found in Borrelia hermsii (strain HS1 / DAH).